A 2032-amino-acid chain; its full sequence is Cytoskeleton-associated protein 5 (2032 aa).

TOG regions lie at residues 1 to 223 and 268 to 502; these read MGDD…KLPT and YELL…LIHG. K48 bears the N6-acetyllysine mark. 3 HEAT repeats span residues 159-197, 356-394, and 434-472; these read IILL…WIRD, GQYA…TTTL, and KSLL…VVGE. Residues 516–579 are disordered; it reads PLPGRTAASG…GTKNKKGLET (64 aa). Over residues 543-554 the composition is skewed to low complexity; sequence LKKAPAAKAGGP. A TOG 3 region spans residues 588–817; that stretch reads SIEVCEEKAS…EFEKMQGQSP (230 aa). An HEAT 4 repeat occupies 750–788; sequence GLNVKAFISNVKTALAATNPAVRTAAITLLGVMYLYVGP. The tract at residues 811 to 851 is disordered; the sequence is KMQGQSPPAPTRGISKHSTSGTDEGEDGDEPDDGSNDVVDL. Phosphoserine occurs at positions 816 and 845. The segment covering 833–845 has biased composition (acidic residues); sequence DEGEDGDEPDDGS. TOG regions lie at residues 853 to 1081 and 1193 to 1428; these read PRTE…VNMP and IEQL…KRPS. HEAT repeat units lie at residues 855–893, 936–974, and 1013–1051; these read TEIS…DAKF, KQHV…QTGM, and PTDL…HLGY. The interval 1077–1160 is disordered; that stretch reads KVNMPAKPAP…KEDEDKSGPI (84 aa). HEAT repeat units lie at residues 1284–1322, 1324–1357, and 1361–1399; these read ENEA…VYPA, KMFP…SYGM, and QPTP…VHGD. Residues 1422–1443 form a disordered region; it reads RSAKRPSAAPIKQVEEKPQRAQ. Residue S1469 is modified to Phosphoserine. The segment at 1801–1822 is disordered; it reads SMDQTGSKSDKETEKGASRIDE. Over residues 1808-1822 the composition is skewed to basic and acidic residues; the sequence is KSDKETEKGASRIDE. At S1861 the chain carries Phosphoserine. The interval 1932–1957 is interaction with TACC3; sequence PSVYLERLKILRQRCGLDNTKQDDRP. The segment at 1949–2032 is disordered; that stretch reads DNTKQDDRPP…RLERIKSSRK (84 aa). The segment covering 1971 to 1983 has biased composition (polar residues); it reads VASSTDMLHSKLS. Over residues 1984-1997 the composition is skewed to basic and acidic residues; that stretch reads QLRESREQHQHSDL. Residues 2002-2014 are compositionally biased toward low complexity; sequence THSSGTVTSSSST. Residues 2018–2032 are compositionally biased toward basic and acidic residues; sequence DDLKKRLERIKSSRK.

The protein belongs to the TOG/XMAP215 family. Interacts with TACC1. Interacts with SLAIN2 and SLAIN1. Interacts with HNRNPA2B1. Interacts with TACC3 independently of clathrin. Interacts with TACC3 and clathrin forming the TACC3/ch-TOG/clathrin complex located at spindle inter-microtubules bridges. Interacts with NDC80; indicative for an association with the NDC80 complex. In terms of tissue distribution, overexpressed in hepatomas and colonic tumors. Also expressed in skeletal muscle, brain, heart, placenta, lung, liver, kidney and pancreas. Expression is elevated in the brain; highly expressed in the Purkinje cell bodies of the cerebellum.

Its subcellular location is the cytoplasm. The protein resides in the cytoskeleton. It is found in the microtubule organizing center. The protein localises to the centrosome. It localises to the spindle pole. Its subcellular location is the spindle. The protein resides in the chromosome. It is found in the centromere. The protein localises to the kinetochore. Functionally, binds to the plus end of microtubules and regulates microtubule dynamics and microtubule organization. Acts as a processive microtubule polymerase. Promotes cytoplasmic microtubule nucleation and elongation. Plays a major role in organizing spindle poles. In spindle formation protects kinetochore microtubules from depolymerization by KIF2C and has an essential role in centrosomal microtubule assembly independently of KIF2C activity. Contributes to centrosome integrity. Acts as a component of the TACC3/ch-TOG/clathrin complex proposed to contribute to stabilization of kinetochore fibers of the mitotic spindle by acting as inter-microtubule bridge. The TACC3/ch-TOG/clathrin complex is required for the maintenance of kinetochore fiber tension. Enhances the strength of NDC80 complex-mediated kinetochore-tip microtubule attachments. The polypeptide is Cytoskeleton-associated protein 5 (CKAP5) (Homo sapiens (Human)).